The chain runs to 433 residues: Adenylosuccinate synthetase (433 aa).

Residues Gly-11–Lys-17 and Gly-39–Thr-41 each bind GTP. The active-site Proton acceptor is the Asp-12. Mg(2+) is bound by residues Asp-12 and Gly-39. IMP is bound by residues Asp-12–Lys-15, Asn-37–His-40, Thr-134, Arg-148, Asn-230, Thr-245, and Arg-309. His-40 acts as the Proton donor in catalysis. A substrate-binding site is contributed by Val-305 to Arg-311. GTP-binding positions include Arg-311, Lys-337–Asp-339, and Gly-419–Gly-421.

This sequence belongs to the adenylosuccinate synthetase family. Homodimer. It depends on Mg(2+) as a cofactor.

It localises to the cytoplasm. The catalysed reaction is IMP + L-aspartate + GTP = N(6)-(1,2-dicarboxyethyl)-AMP + GDP + phosphate + 2 H(+). It functions in the pathway purine metabolism; AMP biosynthesis via de novo pathway; AMP from IMP: step 1/2. Functionally, plays an important role in the de novo pathway and in the salvage pathway of purine nucleotide biosynthesis. Catalyzes the first committed step in the biosynthesis of AMP from IMP. This is Adenylosuccinate synthetase from Saccharomyces cerevisiae (strain AWRI1631) (Baker's yeast).